A 388-amino-acid polypeptide reads, in one-letter code: Ovalbumin-related protein Y (388 aa).

Cys-74 and Cys-121 form a disulfide bridge. N-linked (GlcNAc...) asparagine glycans are attached at residues Asn-95, Asn-215, Asn-293, and Asn-312.

This sequence belongs to the serpin family. Ov-serpin subfamily. In terms of processing, N-glycosylated on at least two Asn residues by ovomucoid type carbohydrate units. Post-translationally, the N-terminus is blocked. Major protein of egg white. Expressed in the magnum of the oviduct (at protein level).

The protein resides in the secreted. This chain is Ovalbumin-related protein Y (SERPINB14B), found in Gallus gallus (Chicken).